A 462-amino-acid polypeptide reads, in one-letter code: ESX-1 secretion system protein EccE1 (462 aa).

2 helical membrane passes run 9 to 29 (FSTG…IAFL) and 34 to 54 (WWAG…TFYG).

The protein belongs to the EccE family. Part of the ESX-1 / type VII secretion system (T7SS), which is composed of cytosolic and membrane components. The ESX-1 membrane complex is composed of EccB1, EccCa1, EccCb1, EccD1 and EccE1.

The protein resides in the cell inner membrane. Part of the ESX-1 specialized secretion system, which delivers several virulence factors to host cells during infection, including the key virulence factors EsxA (ESAT-6) and EsxB (CFP-10). This chain is ESX-1 secretion system protein EccE1, found in Mycobacterium tuberculosis (strain CDC 1551 / Oshkosh).